The sequence spans 271 residues: 4-hydroxy-tetrahydrodipicolinate reductase (271 aa).

Residues 12–17 (GGSGRM) and E38 each bind NAD(+). An NADP(+)-binding site is contributed by R39. Residues 102-104 (GTT) and 126-129 (APNM) each bind NAD(+). H159 (proton donor/acceptor) is an active-site residue. H160 is a binding site for (S)-2,3,4,5-tetrahydrodipicolinate. K163 (proton donor) is an active-site residue. 169-170 (GT) is a binding site for (S)-2,3,4,5-tetrahydrodipicolinate.

The protein belongs to the DapB family.

The protein localises to the cytoplasm. It carries out the reaction (S)-2,3,4,5-tetrahydrodipicolinate + NAD(+) + H2O = (2S,4S)-4-hydroxy-2,3,4,5-tetrahydrodipicolinate + NADH + H(+). The enzyme catalyses (S)-2,3,4,5-tetrahydrodipicolinate + NADP(+) + H2O = (2S,4S)-4-hydroxy-2,3,4,5-tetrahydrodipicolinate + NADPH + H(+). It functions in the pathway amino-acid biosynthesis; L-lysine biosynthesis via DAP pathway; (S)-tetrahydrodipicolinate from L-aspartate: step 4/4. In terms of biological role, catalyzes the conversion of 4-hydroxy-tetrahydrodipicolinate (HTPA) to tetrahydrodipicolinate. The polypeptide is 4-hydroxy-tetrahydrodipicolinate reductase (Shewanella sediminis (strain HAW-EB3)).